A 644-amino-acid chain; its full sequence is Exoribonuclease 2 (644 aa).

Residues 189 to 516 (RRDLTALDFV…NHRLLKAIIK (328 aa)) enclose the RNB domain. The S1 motif domain maps to 561 to 643 (DTRFAAEIID…ETRSIIARPA (83 aa)).

It belongs to the RNR ribonuclease family. RNase II subfamily.

The protein localises to the cytoplasm. It catalyses the reaction Exonucleolytic cleavage in the 3'- to 5'-direction to yield nucleoside 5'-phosphates.. Involved in mRNA degradation. Hydrolyzes single-stranded polyribonucleotides processively in the 3' to 5' direction. This Klebsiella pneumoniae subsp. pneumoniae (strain ATCC 700721 / MGH 78578) protein is Exoribonuclease 2.